The primary structure comprises 459 residues: Glutamyl-tRNA reductase (459 aa).

Substrate is bound by residues 49-52 (TCNR), Ser109, 114-116 (ETQ), and Gln120. Cys50 serves as the catalytic Nucleophile. 189-194 (GAGKMG) contributes to the NADP(+) binding site.

Belongs to the glutamyl-tRNA reductase family. As to quaternary structure, homodimer.

The enzyme catalyses (S)-4-amino-5-oxopentanoate + tRNA(Glu) + NADP(+) = L-glutamyl-tRNA(Glu) + NADPH + H(+). It participates in porphyrin-containing compound metabolism; protoporphyrin-IX biosynthesis; 5-aminolevulinate from L-glutamyl-tRNA(Glu): step 1/2. Functionally, catalyzes the NADPH-dependent reduction of glutamyl-tRNA(Glu) to glutamate 1-semialdehyde (GSA). This Halalkalibacterium halodurans (strain ATCC BAA-125 / DSM 18197 / FERM 7344 / JCM 9153 / C-125) (Bacillus halodurans) protein is Glutamyl-tRNA reductase.